Here is a 98-residue protein sequence, read N- to C-terminus: NADH-ubiquinone oxidoreductase chain 4L (98 aa).

3 consecutive transmembrane segments (helical) span residues 1–21 (MSPM…GLAF), 26–46 (LLSA…ATAT), and 58–78 (ILPM…LAIL).

Belongs to the complex I subunit 4L family.

The protein resides in the mitochondrion membrane. The enzyme catalyses a ubiquinone + NADH + 5 H(+)(in) = a ubiquinol + NAD(+) + 4 H(+)(out). Core subunit of the mitochondrial membrane respiratory chain NADH dehydrogenase (Complex I) which catalyzes electron transfer from NADH through the respiratory chain, using ubiquinone as an electron acceptor. Part of the enzyme membrane arm which is embedded in the lipid bilayer and involved in proton translocation. This is NADH-ubiquinone oxidoreductase chain 4L (MT-ND4L) from Scyliorhinus canicula (Small-spotted catshark).